The following is a 565-amino-acid chain: MAQRIFTLILLLCSTSVFAGLFDAPGRSQFVPADQAFAFDFQQNQHDLNLTWQIKDGYYLYRKQIRITPEHAKIADVQLPQGVWHEDEFYGKSEIYRDRLTLPVTINQASAGATLTVTYQGCADAGFCYPPETKTVPLSEVVANNAASQPVSVSQQEQHTAQLPFSALWALLIGIGIAFTPCVLPMYPLISGIVLGGKQRLSTARALLLTFIYVQGMALTYTALGLVVAAAGLQFQAALQHPYVLIGLAIVFTLLAMSMFGLFTLQLPSSLQTRLTLMSNRQQGGSPGGVFVMGAIAGLICSPCTTAPLSAILLYIAQSGNMWLGGGTLYLYALGMGLPLMLITVFGNRLLPKSGPWMEQVKTAFGFVILALPVFLLERVIGDVWGLRLWSALGVAFFGWAFITSLQAKRGWMRVVQIILLAAALVSVRPLQDWAFGATHTAQTQTHLNFTQIKTVDELNQALVEAKGKPVMLDLYADWCVACKEFEKYTFSDPQVQKALADTVLLQANVTANDAQDVALLKHLNVLGLPTILFFDGQGQEHPQARVTGFMDAETFSAHLRDRQP.

The signal sequence occupies residues M1–A19. 2 cysteine pairs are disulfide-bonded: C122/C128 and C182/C304. Helical transmembrane passes span L163–V183, L208–V228, Y243–F263, I296–I316, W323–I343, W357–L377, and V384–T404. The region spanning W434–P565 is the Thioredoxin domain. C480 and C483 are oxidised to a cystine.

It belongs to the thioredoxin family. DsbD subfamily.

The protein localises to the cell inner membrane. The enzyme catalyses [protein]-dithiol + NAD(+) = [protein]-disulfide + NADH + H(+). It carries out the reaction [protein]-dithiol + NADP(+) = [protein]-disulfide + NADPH + H(+). Its function is as follows. Required to facilitate the formation of correct disulfide bonds in some periplasmic proteins and for the assembly of the periplasmic c-type cytochromes. Acts by transferring electrons from cytoplasmic thioredoxin to the periplasm. This transfer involves a cascade of disulfide bond formation and reduction steps. The sequence is that of Thiol:disulfide interchange protein DsbD from Shigella flexneri serotype 5b (strain 8401).